Consider the following 199-residue polypeptide: Imidazole glycerol phosphate synthase subunit HisH (199 aa).

One can recognise a Glutamine amidotransferase type-1 domain in the interval 3–199 (NITIIDTGCA…LKNFVEKVPF (197 aa)). C78 (nucleophile) is an active-site residue. Active-site residues include H178 and E180.

As to quaternary structure, heterodimer of HisH and HisF.

The protein localises to the cytoplasm. The catalysed reaction is 5-[(5-phospho-1-deoxy-D-ribulos-1-ylimino)methylamino]-1-(5-phospho-beta-D-ribosyl)imidazole-4-carboxamide + L-glutamine = D-erythro-1-(imidazol-4-yl)glycerol 3-phosphate + 5-amino-1-(5-phospho-beta-D-ribosyl)imidazole-4-carboxamide + L-glutamate + H(+). It catalyses the reaction L-glutamine + H2O = L-glutamate + NH4(+). Its pathway is amino-acid biosynthesis; L-histidine biosynthesis; L-histidine from 5-phospho-alpha-D-ribose 1-diphosphate: step 5/9. IGPS catalyzes the conversion of PRFAR and glutamine to IGP, AICAR and glutamate. The HisH subunit catalyzes the hydrolysis of glutamine to glutamate and ammonia as part of the synthesis of IGP and AICAR. The resulting ammonia molecule is channeled to the active site of HisF. This is Imidazole glycerol phosphate synthase subunit HisH (hisH) from Haemophilus influenzae (strain ATCC 51907 / DSM 11121 / KW20 / Rd).